Here is a 290-residue protein sequence, read N- to C-terminus: Lipoyl synthase (290 aa).

Residues C36, C41, C47, C62, C66, C69, and S275 each contribute to the [4Fe-4S] cluster site. The Radical SAM core domain maps to 48–264 (FSKKTATFMI…KEEALKIGFS (217 aa)).

This sequence belongs to the radical SAM superfamily. Lipoyl synthase family. [4Fe-4S] cluster serves as cofactor.

The protein localises to the cytoplasm. The catalysed reaction is [[Fe-S] cluster scaffold protein carrying a second [4Fe-4S](2+) cluster] + N(6)-octanoyl-L-lysyl-[protein] + 2 oxidized [2Fe-2S]-[ferredoxin] + 2 S-adenosyl-L-methionine + 4 H(+) = [[Fe-S] cluster scaffold protein] + N(6)-[(R)-dihydrolipoyl]-L-lysyl-[protein] + 4 Fe(3+) + 2 hydrogen sulfide + 2 5'-deoxyadenosine + 2 L-methionine + 2 reduced [2Fe-2S]-[ferredoxin]. It participates in protein modification; protein lipoylation via endogenous pathway; protein N(6)-(lipoyl)lysine from octanoyl-[acyl-carrier-protein]: step 2/2. Its function is as follows. Catalyzes the radical-mediated insertion of two sulfur atoms into the C-6 and C-8 positions of the octanoyl moiety bound to the lipoyl domains of lipoate-dependent enzymes, thereby converting the octanoylated domains into lipoylated derivatives. The protein is Lipoyl synthase of Alkaliphilus metalliredigens (strain QYMF).